Reading from the N-terminus, the 662-residue chain is Transforming growth factor beta activator LRRC32 (662 aa).

A signal peptide spans 1–17 (MRPQILLLLALLTLGLA). The Extracellular segment spans residues 18-625 (AQRQDKVPCK…EDCEKGGLKN (608 aa)). The 28-residue stretch at 21-48 (QDKVPCKMVDKKVSCQGLGLLQVPSVLP) folds into the LRRNT domain. LRR repeat units follow at residues 50–73 (DTET…GFYT), 74–95 (ALRH…AFQA), 98–119 (HLEH…SAGG), 125–145 (RVTS…ERLL), 150–171 (SLHT…TFRD), 174–195 (VLEQ…AFEG), 198–219 (RLTH…SLQQ), 220–240 (LRVL…SQPQ), 244–265 (QLTW…AALP), and 266–286 (RLIY…PPQD). The N-linked (GlcNAc...) asparagine glycan is linked to Asn-203. 2 N-linked (GlcNAc...) asparagine glycosylation sites follow: Asn-271 and Asn-308. 10 LRR repeats span residues 316–339 (QLLN…EHLT), 340–361 (SLCF…RSGS), 364–385 (CLML…ARAL), 387–408 (SLRT…TFAN), 411–432 (SLQR…DEPG), 444–465 (SLHS…AFLH), 467–488 (PLTE…ALGG), 492–513 (SLEV…LPCF), 515–536 (CLKR…TQAV), and 537–558 (SLEV…AMGG). N-linked (GlcNAc...) asparagine glycosylation occurs at Asn-345. Asn-545 carries an N-linked (GlcNAc...) asparagine glycan. Residues 571 to 620 (NPLSCCGNGWLAAQLHQGRVDVDATQDLICRFSSQEEVSLSHVRPEDCEK) enclose the LRRCT domain. A helical transmembrane segment spans residues 626-646 (INLIIILTFILVSAILLTTLA). The Cytoplasmic segment spans residues 647-662 (TCCCVRRQKFNQQYKA).

It belongs to the LRRC32/LRRC33 family. In terms of assembly, interacts with TGFB1; associates via disulfide bonds with the Latency-associated peptide chain (LAP) regulatory chain of TGFB1, leading to regulate activation of TGF-beta-1. Interacts with TGFB2. Interacts with TGFB3; associates via disulfide bonds with the Latency-associated peptide chain (LAP) regulatory chain of TGFB3, leading to regulate activation of TGF-beta-3. Interacts with LAPTM4B; decreases TGFB1 production in regulatory T-cells.

The protein localises to the cell membrane. It is found in the cell surface. In terms of biological role, key regulator of transforming growth factor beta (TGFB1, TGFB2 and TGFB3) that controls TGF-beta activation by maintaining it in a latent state during storage in extracellular space. Associates specifically via disulfide bonds with the Latency-associated peptide (LAP), which is the regulatory chain of TGF-beta, and regulates integrin-dependent activation of TGF-beta. Able to outcompete LTBP1 for binding to LAP regulatory chain of TGF-beta. Controls activation of TGF-beta-1 (TGFB1) on the surface of activated regulatory T-cells (Tregs). Required for epithelial fusion during palate development by regulating activation of TGF-beta-3 (TGFB3). The sequence is that of Transforming growth factor beta activator LRRC32 from Pongo abelii (Sumatran orangutan).